We begin with the raw amino-acid sequence, 571 residues long: 2-succinyl-5-enolpyruvyl-6-hydroxy-3-cyclohexene-1-carboxylate synthase (571 aa).

This sequence belongs to the TPP enzyme family. MenD subfamily. In terms of assembly, homodimer. Mg(2+) serves as cofactor. Requires Mn(2+) as cofactor. It depends on thiamine diphosphate as a cofactor.

It carries out the reaction isochorismate + 2-oxoglutarate + H(+) = 5-enolpyruvoyl-6-hydroxy-2-succinyl-cyclohex-3-ene-1-carboxylate + CO2. The protein operates within quinol/quinone metabolism; 1,4-dihydroxy-2-naphthoate biosynthesis; 1,4-dihydroxy-2-naphthoate from chorismate: step 2/7. Its pathway is quinol/quinone metabolism; menaquinone biosynthesis. Catalyzes the thiamine diphosphate-dependent decarboxylation of 2-oxoglutarate and the subsequent addition of the resulting succinic semialdehyde-thiamine pyrophosphate anion to isochorismate to yield 2-succinyl-5-enolpyruvyl-6-hydroxy-3-cyclohexene-1-carboxylate (SEPHCHC). The protein is 2-succinyl-5-enolpyruvyl-6-hydroxy-3-cyclohexene-1-carboxylate synthase of Vibrio parahaemolyticus serotype O3:K6 (strain RIMD 2210633).